Consider the following 1063-residue polypeptide: Error-prone DNA polymerase (1063 aa).

Belongs to the DNA polymerase type-C family. DnaE2 subfamily.

It localises to the cytoplasm. The enzyme catalyses DNA(n) + a 2'-deoxyribonucleoside 5'-triphosphate = DNA(n+1) + diphosphate. Functionally, DNA polymerase involved in damage-induced mutagenesis and translesion synthesis (TLS). It is not the major replicative DNA polymerase. This Burkholderia mallei (strain ATCC 23344) protein is Error-prone DNA polymerase.